Here is a 122-residue protein sequence, read N- to C-terminus: Large ribosomal subunit protein bL12 (122 aa).

The protein belongs to the bacterial ribosomal protein bL12 family. In terms of assembly, homodimer. Part of the ribosomal stalk of the 50S ribosomal subunit. Forms a multimeric L10(L12)X complex, where L10 forms an elongated spine to which 2 to 4 L12 dimers bind in a sequential fashion. Binds GTP-bound translation factors.

In terms of biological role, forms part of the ribosomal stalk which helps the ribosome interact with GTP-bound translation factors. Is thus essential for accurate translation. The protein is Large ribosomal subunit protein bL12 of Buchnera aphidicola subsp. Schizaphis graminum (strain Sg).